Consider the following 225-residue polypeptide: Ribonuclease 3 (225 aa).

In terms of domain architecture, RNase III spans 4-133; sequence FEKLETLLGY…LIAAIYLDSN (130 aa). A Mg(2+)-binding site is contributed by glutamate 46. Residue aspartate 50 is part of the active site. Residues asparagine 119 and glutamate 122 each coordinate Mg(2+). The active site involves glutamate 122. Residues 158–225 enclose the DRBM domain; that stretch reads DPKTALQEWA…AARSLLHRLK (68 aa).

The protein belongs to the ribonuclease III family. As to quaternary structure, homodimer. Mg(2+) is required as a cofactor.

The protein localises to the cytoplasm. The catalysed reaction is Endonucleolytic cleavage to 5'-phosphomonoester.. Its function is as follows. Digests double-stranded RNA. Involved in the processing of primary rRNA transcript to yield the immediate precursors to the large and small rRNAs (23S and 16S). Processes some mRNAs, and tRNAs when they are encoded in the rRNA operon. Processes pre-crRNA and tracrRNA of type II CRISPR loci if present in the organism. The sequence is that of Ribonuclease 3 from Rickettsia prowazekii (strain Madrid E).